Here is a 181-residue protein sequence, read N- to C-terminus: Inner membrane-spanning protein YciB (181 aa).

A run of 5 helical transmembrane segments spans residues 8 to 28, 53 to 73, 76 to 96, 121 to 141, and 149 to 169; these read FPII…ATAA, ITLI…NAIF, WKPT…HFFG, LSWA…VYNF, and FKLF…AFYI.

The protein belongs to the YciB family.

Its subcellular location is the cell inner membrane. Its function is as follows. Plays a role in cell envelope biogenesis, maintenance of cell envelope integrity and membrane homeostasis. The sequence is that of Inner membrane-spanning protein YciB from Coxiella burnetii (strain CbuK_Q154) (Coxiella burnetii (strain Q154)).